The following is a 210-amino-acid chain: Orotate phosphoribosyltransferase (210 aa).

5-phospho-alpha-D-ribose 1-diphosphate is bound by residues R94, K98, H100, and 120–128; that span reads EDLISTGGS. S124 is an orotate binding site.

The protein belongs to the purine/pyrimidine phosphoribosyltransferase family. PyrE subfamily. In terms of assembly, homodimer. Mg(2+) serves as cofactor.

The catalysed reaction is orotidine 5'-phosphate + diphosphate = orotate + 5-phospho-alpha-D-ribose 1-diphosphate. It functions in the pathway pyrimidine metabolism; UMP biosynthesis via de novo pathway; UMP from orotate: step 1/2. Its function is as follows. Catalyzes the transfer of a ribosyl phosphate group from 5-phosphoribose 1-diphosphate to orotate, leading to the formation of orotidine monophosphate (OMP). This chain is Orotate phosphoribosyltransferase, found in Bacillus mycoides (strain KBAB4) (Bacillus weihenstephanensis).